The sequence spans 212 residues: MSQEHQDVKTGTTTVGIVFDGGVILATERRATMGNLIASKKAKKVHAITDKIGMTIAGGVGDAQQLVRIINVECNLYEIRRGQKISVGAAATILSNYLNQNRFSPYYVQLLVGGVDTSGPSVYSVDAAGGATLEENFVSTGSGSLTAYGVLEDRFKPNMTEEEAIELAVRALRAAMLRDSASGEGYNVVIITQEKFEYLPEDKIAGYLPPAK.

Residues 1-11 (MSQEHQDVKTG) constitute a propeptide, removed in mature form; by autocatalysis. The active-site Nucleophile is the threonine 12.

The protein belongs to the peptidase T1B family. As to quaternary structure, the 20S proteasome core is composed of 14 alpha and 14 beta subunits that assemble into four stacked heptameric rings, resulting in a barrel-shaped structure. The two inner rings, each composed of seven catalytic beta subunits, are sandwiched by two outer rings, each composed of seven alpha subunits. The catalytic chamber with the active sites is on the inside of the barrel. Has a gated structure, the ends of the cylinder being occluded by the N-termini of the alpha-subunits. Is capped at one or both ends by the proteasome regulatory ATPase, PAN.

It is found in the cytoplasm. The enzyme catalyses Cleavage of peptide bonds with very broad specificity.. The formation of the proteasomal ATPase PAN-20S proteasome complex, via the docking of the C-termini of PAN into the intersubunit pockets in the alpha-rings, triggers opening of the gate for substrate entry. Interconversion between the open-gate and close-gate conformations leads to a dynamic regulation of the 20S proteasome proteolysis activity. Its function is as follows. Component of the proteasome core, a large protease complex with broad specificity involved in protein degradation. The chain is Proteasome subunit beta from Methanocorpusculum labreanum (strain ATCC 43576 / DSM 4855 / Z).